We begin with the raw amino-acid sequence, 490 residues long: Auxin transporter-like protein 5 (490 aa).

Topologically, residues 1–55 (MEMANDKVAETVIVGNYVEMESEGKPPQDIKSKLSNFLWHGGSAYDAWFSCASNQ) are cytoplasmic. Residues 56 to 73 (VAQVLLTLPYSFSQLGML) traverse the membrane as a helical segment. Topologically, residues 74-75 (SG) are extracellular. A helical transmembrane segment spans residues 76–96 (ILFQLFYGILGSWTAYLISIL). Residues 97–132 (YVEYRTRKEREKVNFRSHVIQWFEVLDGLLGKHWRN) are Cytoplasmic-facing. A helical membrane pass occupies residues 133–153 (VGLGFNCTFLLFGSVIQLIAC). Residues 154–168 (ASNIYYINDNLDKRT) are Extracellular-facing. A helical membrane pass occupies residues 169–189 (WTYIFGACCATTVFIPSFHNY). Residue Arg190 is a topological domain, cytoplasmic. The chain crosses the membrane as a helical span at residues 191–211 (IWSFLGLVMTTYTAWYLTIAA). Residues 212–227 (VLHGQVEGVKHSGPNK) are Extracellular-facing. A helical membrane pass occupies residues 228–248 (IILYFTGATNILYTFGGHAVT). Residues 249-262 (VEIMHAMWKPQKFK) lie on the Cytoplasmic side of the membrane. Residues 263–283 (AIYLLATLYVLTLTIPSATAV) form a helical membrane-spanning segment. Over 284 to 310 (YWAFGDMLLNHSNAFALLPKSPFRDMA) the chain is Extracellular. N-linked (GlcNAc...) asparagine glycosylation is present at Asn293. Residues 311-331 (VILMLIHQFITFGFACTPLYF) form a helical membrane-spanning segment. The Cytoplasmic portion of the chain corresponds to 332–352 (VWEKTVGMHECKSLCKRALVR). A helical membrane pass occupies residues 353–373 (LPVVIPIWFLAIIFPFFGPIN). The Extracellular portion of the chain corresponds to 374–376 (STV). A helical membrane pass occupies residues 377–397 (GSLLVSFTVYIIPALAHIFTF). Over 398–420 (KSSSARQNAVEQPPKFVGRWVGT) the chain is Cytoplasmic. A helical transmembrane segment spans residues 421–441 (FVINVFIVVWVLIVGFGFGGW). Over 442–490 (ASMVNFVHQIDTFGLFTKCYQCPPPTPSVPTMPPHQMNATAPSPHHHHH) the chain is Extracellular. The N-linked (GlcNAc...) asparagine glycan is linked to Asn479.

The protein belongs to the amino acid/polyamine transporter 2 family. Amino acid/auxin permease (AAAP) (TC 2.A.18.1) subfamily. As to expression, shoots and roots of nodulating plants, at low levels.

The protein resides in the cell membrane. Carrier protein involved in proton-driven auxin influx. Mediates the formation of auxin gradient from developing leaves (site of auxin biosynthesis) to tips by contributing to the loading of auxin in vascular tissues and facilitating acropetal (base to tip) auxin transport within inner tissues of the root apex, and basipetal (tip to base) auxin transport within outer tissues of the root apex. May be involved in lateral roots and nodules formation. The protein is Auxin transporter-like protein 5 (LAX5) of Medicago truncatula (Barrel medic).